Reading from the N-terminus, the 282-residue chain is 4-hydroxy-3-methylbut-2-enyl diphosphate reductase (282 aa).

Cys-12 contacts [4Fe-4S] cluster. Residues His-40 and His-72 each coordinate (2E)-4-hydroxy-3-methylbut-2-enyl diphosphate. Residues His-40 and His-72 each coordinate dimethylallyl diphosphate. Isopentenyl diphosphate-binding residues include His-40 and His-72. Cys-94 is a binding site for [4Fe-4S] cluster. A (2E)-4-hydroxy-3-methylbut-2-enyl diphosphate-binding site is contributed by His-122. A dimethylallyl diphosphate-binding site is contributed by His-122. Residue His-122 coordinates isopentenyl diphosphate. The Proton donor role is filled by Glu-124. Thr-160 is a binding site for (2E)-4-hydroxy-3-methylbut-2-enyl diphosphate. Residue Cys-188 coordinates [4Fe-4S] cluster. Ser-216, Asn-218, and Ser-260 together coordinate (2E)-4-hydroxy-3-methylbut-2-enyl diphosphate. Positions 216, 218, and 260 each coordinate dimethylallyl diphosphate. Ser-216, Asn-218, and Ser-260 together coordinate isopentenyl diphosphate.

The protein belongs to the IspH family. It depends on [4Fe-4S] cluster as a cofactor.

The enzyme catalyses isopentenyl diphosphate + 2 oxidized [2Fe-2S]-[ferredoxin] + H2O = (2E)-4-hydroxy-3-methylbut-2-enyl diphosphate + 2 reduced [2Fe-2S]-[ferredoxin] + 2 H(+). It catalyses the reaction dimethylallyl diphosphate + 2 oxidized [2Fe-2S]-[ferredoxin] + H2O = (2E)-4-hydroxy-3-methylbut-2-enyl diphosphate + 2 reduced [2Fe-2S]-[ferredoxin] + 2 H(+). Its pathway is isoprenoid biosynthesis; dimethylallyl diphosphate biosynthesis; dimethylallyl diphosphate from (2E)-4-hydroxy-3-methylbutenyl diphosphate: step 1/1. It participates in isoprenoid biosynthesis; isopentenyl diphosphate biosynthesis via DXP pathway; isopentenyl diphosphate from 1-deoxy-D-xylulose 5-phosphate: step 6/6. Its function is as follows. Catalyzes the conversion of 1-hydroxy-2-methyl-2-(E)-butenyl 4-diphosphate (HMBPP) into a mixture of isopentenyl diphosphate (IPP) and dimethylallyl diphosphate (DMAPP). Acts in the terminal step of the DOXP/MEP pathway for isoprenoid precursor biosynthesis. This Geotalea uraniireducens (strain Rf4) (Geobacter uraniireducens) protein is 4-hydroxy-3-methylbut-2-enyl diphosphate reductase.